The following is a 330-amino-acid chain: AH receptor-interacting protein (330 aa).

Residues 31–121 enclose the PPIase FKBP-type domain; the sequence is GTKATFHYRT…KDPLEGQRHC (91 aa). Ser43 carries the phosphoserine modification. 3 TPR repeats span residues 179–212, 231–264, and 265–298; these read VPLI…LKNL, TPLL…YDDN, and VKAY…DPAL.

In terms of assembly, interacts with RET in the pituitary gland; this interaction prevents the formation of the AIP-survivin complex. In terms of tissue distribution, widely expressed. Higher levels seen in the heart, placenta and skeletal muscle. Not expressed in the liver.

It localises to the cytoplasm. Its function is as follows. May play a positive role in AHR-mediated (aromatic hydrocarbon receptor) signaling, possibly by influencing its receptivity for ligand and/or its nuclear targeting. In terms of biological role, cellular negative regulator of the hepatitis B virus (HBV) X protein. The sequence is that of AH receptor-interacting protein (AIP) from Homo sapiens (Human).